Consider the following 265-residue polypeptide: Eukaryotic translation initiation factor 3 subunit J (265 aa).

The segment at 1–71 (MSWDDEAING…KESSADRALL (71 aa)) is disordered. Residues 23-32 (WDAEIGDDEP) show a composition bias toward acidic residues. Over residues 42 to 71 (EEKKPAPKPKKEQPKKVKKGKESSADRALL) the composition is skewed to basic and acidic residues. Residue serine 65 is modified to Phosphoserine. Threonine 75 is subject to Phosphothreonine. Serine 92 is modified (phosphoserine). The tract at residues 219-265 (VRGGTATGGAGKKKVKGKTNLGGAFKKDQDFDLDGPDDFEFGDDDFM) is disordered. Position 220 is an omega-N-methylarginine (arginine 220). Over residues 249–265 (FDLDGPDDFEFGDDDFM) the composition is skewed to acidic residues.

Belongs to the eIF-3 subunit J family. Probable component of the eukaryotic translation initiation factor 3 (eIF-3) complex. Is not part of the eIF-3 core complex, with which it is associated in substochiometric amounts.

It is found in the cytoplasm. Component of the eukaryotic translation initiation factor 3 (eIF-3) complex, which is involved in protein synthesis of a specialized repertoire of mRNAs and, together with other initiation factors, stimulates binding of mRNA and methionyl-tRNAi to the 40S ribosome. The eIF-3 complex specifically targets and initiates translation of a subset of mRNAs involved in cell proliferation. In Saccharomyces cerevisiae (strain ATCC 204508 / S288c) (Baker's yeast), this protein is Eukaryotic translation initiation factor 3 subunit J.